A 378-amino-acid polypeptide reads, in one-letter code: Dual-specificity RNA methyltransferase RlmN 2 (378 aa).

Catalysis depends on Glu-113, which acts as the Proton acceptor. Positions 119 to 355 constitute a Radical SAM core domain; the sequence is TEDRRTLCVS…AAYIRRNRGR (237 aa). Cys-126 and Cys-361 are disulfide-bonded. [4Fe-4S] cluster contacts are provided by Cys-133, Cys-137, and Cys-140. Residues 188–189, Ser-220, 242–244, and Asn-318 each bind S-adenosyl-L-methionine; these read GE and SLN. Residue Cys-361 is the S-methylcysteine intermediate of the active site.

This sequence belongs to the radical SAM superfamily. RlmN family. Requires [4Fe-4S] cluster as cofactor.

The protein localises to the cytoplasm. The enzyme catalyses adenosine(2503) in 23S rRNA + 2 reduced [2Fe-2S]-[ferredoxin] + 2 S-adenosyl-L-methionine = 2-methyladenosine(2503) in 23S rRNA + 5'-deoxyadenosine + L-methionine + 2 oxidized [2Fe-2S]-[ferredoxin] + S-adenosyl-L-homocysteine. It catalyses the reaction adenosine(37) in tRNA + 2 reduced [2Fe-2S]-[ferredoxin] + 2 S-adenosyl-L-methionine = 2-methyladenosine(37) in tRNA + 5'-deoxyadenosine + L-methionine + 2 oxidized [2Fe-2S]-[ferredoxin] + S-adenosyl-L-homocysteine. Functionally, specifically methylates position 2 of adenine 2503 in 23S rRNA and position 2 of adenine 37 in tRNAs. m2A2503 modification seems to play a crucial role in the proofreading step occurring at the peptidyl transferase center and thus would serve to optimize ribosomal fidelity. The sequence is that of Dual-specificity RNA methyltransferase RlmN 2 from Myxococcus xanthus (strain DK1622).